Reading from the N-terminus, the 1028-residue chain is MSDDKYHHDKHHDKHHIDSKQSTAAALSSSSTLASSSSMTTTTTTTSTTTTAASPITPKPRKNYPNSADQYELKETIGKGGSGLVQRAICLPFQENVAIKIIDLEHCKNVSLEEIRKEIQAMSLCHHPNVVAYHTSFVYNESLWVIMDFLSAGSCSDIMRFSFPQGFEEHVIATILKEALKAICYFHKTGRIHRDIKSGNILIDSNGNIQLSDFGVSATLIDTGETSRNTFVGTPCWMAPEIMEQVNYDYAVDIWSFGITALELARGKAPFAEYPPMKVLLLTLQNPPPSLEGDGESKWSHSFKDLVEKCLQKDPSKRPLPSKLLEHRFFKQAKKPDYLVQHILAKLPPLGQRYQMLSEDSFAMLRNTSSPQFDTGHSNSADEWIFPNENNDNNNSSTTTTTTTTTTTNPSNNNNNNNNKTKENLTQSPFETPSHTPSTSPGSTPSHSRTSTPTSNHTALGSSSTVVPPPVVPLTLPTAIPVTAAAYHQQQQHHHLSHSSGSIPNHNASSNLGASAHSNVHGLAHSSIHPTSSAASTTVVNNTQQPQTLQPPQQQHQLQQPIKTPSPINAINIVKLNQSDLITPPKTSPKKEGSIPSSSSHGNIPSLVTTSPKSPLQHQQQIPQQQQDPAMINSNNSSISSNGAYNRELISASGSALSKPPSPSSDKENNSTSKSNKSKSRQSSRASSLSESSDSTSHTSSSDEHSSRYESDRKSYKKKKSSSSSSNSKRDRERERDRDRSNKTYKNSRSRNVSRDRERERDRHNRSRDRDRERERERDRDRERDRDRSRDRSRDRSRDRERDRSRDRSRDRDRSRDRSRDRSRERDRDRSRDRSRDRSRSRDSDSRDRSRDRSRSHSNRRRSRSRDSRNKSRDRSSDSDRSRDRSRDRDYKSSKYKKSSRGTSGRKNNKIQSKLDSQATHISYLEDKISTLTNWLQQQNLLNTSNGQVLSPTDPNLVSKLQTQLDVLQSENSYLRNENINLKTIVNGSNSTNNSLNQSSGMAFRNSVSSLHQLNMSNSSNNSRPQTQ.

Positions 1–67 (MSDDKYHHDK…PKPRKNYPNS (67 aa)) are disordered. The span at 20–54 (KQSTAAALSSSSTLASSSSMTTTTTTTSTTTTAAS) shows a compositional bias: low complexity. One can recognise a Protein kinase domain in the interval 71–330 (YELKETIGKG…PSKLLEHRFF (260 aa)). ATP is bound by residues 77-85 (IGKGGSGLV) and Lys-100. The active-site Proton acceptor is the Asp-195. Thr-230 carries the phosphothreonine; by autocatalysis modification. Polar residues predominate over residues 368–381 (TSSPQFDTGHSNSA). Disordered stretches follow at residues 368-467 (TSSP…STVV), 486-561 (AYHQ…LQQP), and 580-914 (DLIT…IQSK). Low complexity-rich tracts occupy residues 387-419 (PNEN…NNNN) and 432-458 (TPSH…SNHT). Composition is skewed to polar residues over residues 503–518 (IPNH…SAHS) and 528–542 (IHPT…VVNN). Positions 543–561 (TQQPQTLQPPQQQHQLQQP) are enriched in low complexity. Over residues 595–616 (IPSSSSHGNIPSLVTTSPKSPL) the composition is skewed to polar residues. Composition is skewed to low complexity over residues 617–642 (QHQQ…ISSN) and 683–700 (SSRA…SHTS). Composition is skewed to basic and acidic residues over residues 701–714 (SSDE…SDRK), 728–742 (SKRD…DRSN), 753–855 (VSRD…DRSR), and 865–893 (SRDS…DYKS).

It belongs to the protein kinase superfamily. STE Ser/Thr protein kinase family. STE20 subfamily. It depends on Mn(2+) as a cofactor. Post-translationally, undergoes autophosphorylation in the catalytic domain.

It catalyses the reaction L-seryl-[protein] + ATP = O-phospho-L-seryl-[protein] + ADP + H(+). The enzyme catalyses L-threonyl-[protein] + ATP = O-phospho-L-threonyl-[protein] + ADP + H(+). The sequence is that of Serine/threonine-protein kinase fray2 from Dictyostelium discoideum (Social amoeba).